A 193-amino-acid chain; its full sequence is Cysteine and glycine-rich protein 1 (193 aa).

In terms of domain architecture, LIM zinc-binding 1 spans 10–61 (CGVCQKTVYFAEEVQCEGNSFHKSCFLCMVCKKNLDSTTVAVHGEEIYCKSC). A Nuclear localization signal motif is present at residues 64-69 (KKYGPK). Phosphoserine is present on Ser-81. The residue at position 84 (Lys-84) is an N6-acetyllysine. A Glycyl lysine isopeptide (Lys-Gly) (interchain with G-Cter in SUMO2) cross-link involves residue Lys-91. Lys-112, Lys-131, Lys-137, and Lys-161 each carry N6-acetyllysine. In terms of domain architecture, LIM zinc-binding 2 spans 119 to 170 (CPRCSQAVYAAEKVIGAGKSWHKSCFRCAKCGKGLESTTLADKDGEIYCKGC). Ser-192 carries the phosphoserine modification.

In terms of assembly, interacts with ASCC1; ASCC2 and TRIP4.

The protein localises to the nucleus. In terms of biological role, could play a role in neuronal development. In Rattus norvegicus (Rat), this protein is Cysteine and glycine-rich protein 1 (Csrp1).